Consider the following 547-residue polypeptide: Chaperonin GroEL 2 (547 aa).

Residues 30-33 (TLGP), lysine 51, 87-91 (DGTTT), glycine 415, 479-481 (NAA), and aspartate 495 each bind ATP. A disordered region spans residues 528–547 (KPATAGLPHGGPGGFGGPEF). Over residues 535 to 547 (PHGGPGGFGGPEF) the composition is skewed to gly residues.

The protein belongs to the chaperonin (HSP60) family. As to quaternary structure, forms a cylinder of 14 subunits composed of two heptameric rings stacked back-to-back. Interacts with the co-chaperonin GroES.

It localises to the cytoplasm. The enzyme catalyses ATP + H2O + a folded polypeptide = ADP + phosphate + an unfolded polypeptide.. In terms of biological role, together with its co-chaperonin GroES, plays an essential role in assisting protein folding. The GroEL-GroES system forms a nano-cage that allows encapsulation of the non-native substrate proteins and provides a physical environment optimized to promote and accelerate protein folding. The chain is Chaperonin GroEL 2 from Azoarcus sp. (strain BH72).